Consider the following 443-residue polypeptide: 23S rRNA (uracil(1939)-C(5))-methyltransferase RlmD (443 aa).

The region spanning 4–66 is the TRAM domain; sequence QNRFDRTSFQ…RHFDEARVVE (63 aa). Residues Cys79, Cys85, Cys88, and Cys167 each contribute to the [4Fe-4S] cluster site. S-adenosyl-L-methionine-binding residues include Gln275, Phe304, Asn309, Glu325, Asp352, and Asp373. Residue Cys399 is the Nucleophile of the active site.

The protein belongs to the class I-like SAM-binding methyltransferase superfamily. RNA M5U methyltransferase family. RlmD subfamily.

The enzyme catalyses uridine(1939) in 23S rRNA + S-adenosyl-L-methionine = 5-methyluridine(1939) in 23S rRNA + S-adenosyl-L-homocysteine + H(+). In terms of biological role, catalyzes the formation of 5-methyl-uridine at position 1939 (m5U1939) in 23S rRNA. The sequence is that of 23S rRNA (uracil(1939)-C(5))-methyltransferase RlmD from Xylella fastidiosa (strain 9a5c).